Reading from the N-terminus, the 66-residue chain is Putative alpha-neurotoxin RjAa44 (66 aa).

The region spanning 1 to 60 (KEGYPVDWGNCKYECMSDAYCKDLCADRKAKSGYCYKLNWSCYCEGLPDDSPIKTNGHCR) is the LCN-type CS-alpha/beta domain. Disulfide bonds link Cys-11–Cys-59, Cys-15–Cys-35, Cys-21–Cys-42, and Cys-25–Cys-44.

It belongs to the long (4 C-C) scorpion toxin superfamily. Sodium channel inhibitor family. Alpha subfamily. In terms of tissue distribution, expressed by the venom gland.

Its subcellular location is the secreted. In terms of biological role, alpha toxins bind voltage-independently at site-3 of sodium channels (Nav) and inhibit the inactivation of the activated channels, thereby blocking neuronal transmission. In Rhopalurus junceus (Caribbean blue scorpion), this protein is Putative alpha-neurotoxin RjAa44.